We begin with the raw amino-acid sequence, 65 residues long: Large ribosomal subunit protein uL29 (65 aa).

The protein belongs to the universal ribosomal protein uL29 family.

This chain is Large ribosomal subunit protein uL29, found in Lactobacillus delbrueckii subsp. bulgaricus (strain ATCC 11842 / DSM 20081 / BCRC 10696 / JCM 1002 / NBRC 13953 / NCIMB 11778 / NCTC 12712 / WDCM 00102 / Lb 14).